The sequence spans 110 residues: Large ribosomal subunit protein uL22 (110 aa).

It belongs to the universal ribosomal protein uL22 family. Part of the 50S ribosomal subunit.

In terms of biological role, this protein binds specifically to 23S rRNA; its binding is stimulated by other ribosomal proteins, e.g. L4, L17, and L20. It is important during the early stages of 50S assembly. It makes multiple contacts with different domains of the 23S rRNA in the assembled 50S subunit and ribosome. The globular domain of the protein is located near the polypeptide exit tunnel on the outside of the subunit, while an extended beta-hairpin is found that lines the wall of the exit tunnel in the center of the 70S ribosome. The polypeptide is Large ribosomal subunit protein uL22 (Citrobacter koseri (strain ATCC BAA-895 / CDC 4225-83 / SGSC4696)).